Reading from the N-terminus, the 266-residue chain is MLRFLVFASLVLYGHSTQDFPETNARVVGGAEARRNSWPSQISLQYLSGGSWYHTCGGTLIRRNWVMTAAHCVSSQMTFRVVVGDHNLSQNDGTEQYVSVQKIMVHPTWNSNNVAAGYDIALLRLAQSVTLNNYVQLAVLPQEGTILANNNPCYITGWGRTRTNGQLSQTLQQAYLPSVDYSICSSSSYWGSTVKTTMVCAGGDGVRSGCQGDSGGPLHCLVNGQYSVHGVTSFVSSMGCNVSKKPTVFTRVSAYISWMNNVIAYT.

A signal peptide spans M1–S16. The propeptide at T17–R26 is activation peptide. The region spanning V27–A264 is the Peptidase S1 domain. C56 and C72 form a disulfide bridge. H71 functions as the Charge relay system in the catalytic mechanism. Positions 85, 87, 90, and 95 each coordinate Ca(2+). The active-site Charge relay system is the D119. 3 cysteine pairs are disulfide-bonded: C153/C220, C184/C200, and C210/C240. S214 serves as the catalytic Charge relay system.

This sequence belongs to the peptidase S1 family. Elastase subfamily. It depends on Ca(2+) as a cofactor. In terms of tissue distribution, pancreas.

It localises to the secreted. The catalysed reaction is Hydrolysis of proteins, including elastin. Preferential cleavage: Ala-|-Xaa.. In terms of biological role, serine proteases that hydrolyze many proteins in addition to elastin. In Rattus norvegicus (Rat), this protein is Chymotrypsin-like elastase family member 1 (Cela1).